The sequence spans 267 residues: Protein TIFY 7 (267 aa).

The Tify domain occupies 113–148 (SSGSSPQLTIFYGGTISVFNDISPDKAQAIMLCAGN). The short motif at 220–244 (PQARKASLARFLEKRKERLMSAMPY) is the Jas element. The short motif at 222–229 (ARKASLAR) is the Nuclear localization signal element.

It belongs to the TIFY/JAZ family. As to quaternary structure, homo- and heterodimer. Interacts with MYC2, MYC3, MYC4, COI1, AFPH2/NINJA, TIFY10A/JAZ1, TIFY10B/JAZ2, TIFY6B/JAZ3, TIFY5A/JAZ8, TIFY9/JAZ10 and TIFY3A/JAZ11. Interacts with RHD6 and RSL1. Post-translationally, ubiquitinated. Targeted for degradation by the SCF(COI1) E3 ubiquitin ligase-proteasome pathway during jasmonate signaling.

It localises to the nucleus. Functionally, repressor of jasmonate responses. Jasmonoyl-isoleucine (JA-Ile) specifically promotes COI1-TIFY7/JAZ9 interaction. Interacts with and suppresses RHD6 and RSL1 transcription factor activities to negatively regulate jasmonate-stimulated root hair development. The protein is Protein TIFY 7 (TIFY7) of Arabidopsis thaliana (Mouse-ear cress).